The sequence spans 1187 residues: MPVQAAQWTEFLSCPICYNEFDENVHKPISLGCSHTVCKTCLNKLHRKACPFDQTAINTDIDVLPVNFALLQLVGAQVPDHQSIKLSNLGENKHYEVAKKCVEDLALYLKPLSGGKGVASLNQSALSRPMQRKLVTLVNCQLVEEEGRVRAMRAARSLGERTVTELILQHQNPQQLSANLWAAVRARGCQFLGPAMQEEALKLVLLALEDGSALSRKVLVLFVVQRLEPRFPQASKTSIGHVVQLLYRASCFKVTKRDEDSSLMQLKEEFRSYEALRREHDAQIVHIAMEAGLRISPEQWSSLLYGDLAHKSHMQSIIDKLQSPESFAKSVQELTIVLQRTGDPANLNRLRPHLELLANIDPNPDAVSPTWEQLENAMVAVKTVVHGLVDFIQNYSRKGHETPQPQPNSKYKTSMCRDLRQQGGCPRGTNCTFAHSQEELEKYRLRNKKMSATVRTFPLLNKVGVNSTVTTTAGNVISVIGSTETTGKIVASTNGISNTESSVSQLIPRGTDSAVRTLETVKKVGKVGTNAQNAGPSAESVSENKIGSPPKTPVSNAAATSAGPSNFGTELNSLPPKSSPFLTRVPVYPQHSESIQYFQDPRTQIPFEVPQYPQTGYYPPPPTVPAGVTPCVPRFVRSSNVPESSLPPASMPYADHYSTFSPRDRMNSSPYQPPPPQQYGPVPPVPSGMYAPVYDSRRIWRPAMYQRDDIIRSNSLPPMDVMHSSVYQTSLRERYNSLDGYYSVACQPPNDPRTTVPLPREPCGHLKTSCEEQLRRKPDQWTQYHTQKTPVSSTLPVATQSPTPPSPLFSVDFRSDFSESVSGAKFEEDHLSHYSPWSCGTIGSCINAIDSEPKDVIANSNAVLMDLDSGDVKRRVHLFEAQRRTKEEDPIIPFSDGPIISKWGAISRSSRTGYHTTDPVQATASQGSATKPISVSDYVPYVNAVDSRWSSYGNDATSSAHYIERDRFIVTDLSGHRKHSSTGDLLSIELQQAKSNSLLLQREANALAMQQKWNSLDEGRHLTLNLLSKEIELRNGENDYTEDTVDTKPDRDIELELSALDTDEPDGQSEQIEEILDIQLGISSQNDQLLNGTAVENGHPAQQHQKDPGKPKRQSLGEDHVILEEQKPILPVTSCFSQPRPMSISSASCLPITTSVSVGNLILKTHVMSEDKNDFLKPIANGKMVNS.

Zn(2+) contacts are provided by Cys14, Cys17, Cys33, His35, Cys38, Cys50, and Asp53. The segment at 14–54 adopts an RING-type; degenerate zinc-finger fold; the sequence is CPICYNEFDENVHKPISLGCSHTVCKTCLNKLHRKACPFDQ. Positions 91–170 are HEPN-N; it reads ENKHYEVAKK…RTVTELILQH (80 aa). The segment at 171–325 is ROQ; it reads QNPQQLSANL…SIIDKLQSPE (155 aa). An HEPN-C region spans residues 326-396; that stretch reads SFAKSVQELT…GLVDFIQNYS (71 aa). A C3H1-type zinc finger spans residues 410–438; that stretch reads KYKTSMCRDLRQQGGCPRGTNCTFAHSQE. 2 disordered regions span residues 527–571 and 640–677; these read VGTN…GTEL and NVPE…PPPQ. Residues 529–545 are compositionally biased toward polar residues; sequence TNAQNAGPSAESVSENK. Ser548 bears the Phosphoserine mark. Polar residues predominate over residues 553 to 571; sequence PVSNAAATSAGPSNFGTEL. Phosphoserine occurs at positions 806, 981, and 1115.

In terms of assembly, interacts with EDC4. Interacts with CCR4-NOT deadenylase complex. Interacts with MAP3K5; the interaction is probably stimulus-dependent. Post-translationally, proteolytically cleaved by MALT1 in activated CD4(+) T cells; cleavage at Arg-509 is critical for promoting RC3H1 degradation in response to T-cell receptor (TCR) stimulation, and hence is necessary for prolonging the stability of a set of mRNAs controlling Th17 cell differentiation. As to expression, highest levels in lymph node and thymus and slightly lesser amounts in brain, lung, and spleen (at protein level). Very weak expression in heart, muscle, and kidney (at protein level). Expressed in CD4(+) helper T-cells (at protein level).

It localises to the cytoplasm. The protein resides in the P-body. The catalysed reaction is S-ubiquitinyl-[E2 ubiquitin-conjugating enzyme]-L-cysteine + [acceptor protein]-L-lysine = [E2 ubiquitin-conjugating enzyme]-L-cysteine + N(6)-ubiquitinyl-[acceptor protein]-L-lysine.. It participates in protein modification; protein ubiquitination. With respect to regulation, binding to dsRNA, but not CDE RNA, crosstalks with the E3 ubiquitin ligase activity and may inhibit ubiquitination. Its function is as follows. Post-transcriptional repressor of mRNAs containing a conserved stem loop motif, called constitutive decay element (CDE), which is often located in the 3'-UTR, as in HMGXB3, ICOS, IER3, NFKBID, NFKBIZ, PPP1R10, TNF and in many more mRNAs. Binds to CDE and promotes mRNA deadenylation and degradation. This process does not involve miRNAs. In follicular helper T (Tfh) cells, represses of ICOS and TNFRSF4 expression, thus preventing spontaneous Tfh cell differentiation, germinal center B-cell differentiation in the absence of immunization and autoimmunity. In resting or LPS-stimulated macrophages, controls inflammation by suppressing TNF expression. Also recognizes CDE in its own mRNA and in that of paralogous RC3H1, possibly leading to feedback loop regulation. Inhibits cooperatively with ZC3H12A the differentiation of helper T cells Th17 in lungs. They repress target mRNA encoding the Th17 cell-promoting factors IL6, ICOS, REL, IRF4, NFKBID and NFKBIZ. The cooperation requires RNA-binding by RC3H1 and the nuclease activity of ZC3H12A. miRNA-binding protein that regulates microRNA homeostasis. Enhances DICER-mediated processing of pre-MIR146a but reduces mature MIR146a levels through an increase of 3' end uridylation. Both inhibits ICOS mRNA expression and they may act together to exert the suppression. Acts as a ubiquitin E3 ligase. Pairs with E2 enzymes UBE2B, UBE2D2, UBE2E2, UBE2E3, UBE2G2, UBE2K and UBE2Q2 and produces polyubiquitin chains. Shows the strongest activity when paired with UBE2N:UBE2V1 or UBE2N:UBE2V2 E2 complexes and generate both short and long polyubiquitin chains. Involved in the ubiquitination of MAP3K5. Able to interact with double-stranded RNA (dsRNA). The sequence is that of Roquin-2 (Rc3h2) from Mus musculus (Mouse).